The sequence spans 175 residues: Putative metal-dependent hydrolase BPUM_0784 (175 aa).

Histidine 65, histidine 157, and histidine 161 together coordinate Zn(2+).

This sequence belongs to the metal hydrolase YfiT family. In terms of assembly, homodimer. Zn(2+) is required as a cofactor.

The protein resides in the cytoplasm. Possible metal-dependent hydrolase. This is Putative metal-dependent hydrolase BPUM_0784 from Bacillus pumilus (strain SAFR-032).